The following is a 304-amino-acid chain: Ornithine carbamoyltransferase (304 aa).

Carbamoyl phosphate-binding positions include 47–50 (STRT), Arg98, and 125–128 (HPCQ). Residues Asn156, Asp221, and 225 to 226 (SM) each bind L-ornithine. Residues 262–263 (CL) and Arg290 contribute to the carbamoyl phosphate site.

The protein belongs to the aspartate/ornithine carbamoyltransferase superfamily. OTCase family.

It localises to the cytoplasm. The enzyme catalyses carbamoyl phosphate + L-ornithine = L-citrulline + phosphate + H(+). Its pathway is amino-acid biosynthesis; L-arginine biosynthesis; L-arginine from L-ornithine and carbamoyl phosphate: step 1/3. In terms of biological role, reversibly catalyzes the transfer of the carbamoyl group from carbamoyl phosphate (CP) to the N(epsilon) atom of ornithine (ORN) to produce L-citrulline. This is Ornithine carbamoyltransferase from Methanococcus maripaludis (strain C7 / ATCC BAA-1331).